The primary structure comprises 182 residues: uncharacterized protein (182 aa).

This is an uncharacterized protein from Thermoproteus tenax (TTV1).